The primary structure comprises 309 residues: Porphobilinogen deaminase (309 aa).

Residue Cys-241 is modified to S-(dipyrrolylmethanemethyl)cysteine.

Belongs to the HMBS family. Monomer. Dipyrromethane is required as a cofactor.

The enzyme catalyses 4 porphobilinogen + H2O = hydroxymethylbilane + 4 NH4(+). It functions in the pathway porphyrin-containing compound metabolism; protoporphyrin-IX biosynthesis; coproporphyrinogen-III from 5-aminolevulinate: step 2/4. Functionally, tetrapolymerization of the monopyrrole PBG into the hydroxymethylbilane pre-uroporphyrinogen in several discrete steps. This Geobacillus kaustophilus (strain HTA426) protein is Porphobilinogen deaminase.